A 279-amino-acid polypeptide reads, in one-letter code: Histone chaperone ASF1 (279 aa).

Residues 1 to 143 (MSIVSLLGIK…HIVRNILAEK (143 aa)) form an interaction with HIR1 region. Residues 1–155 (MSIVSLLGIK…VTRFNIVWDN (155 aa)) are interaction with histone H3, histone H4, RAD53 and the RF-C complex. The segment at 156 to 279 (ENEGDLYPPE…TPKDAARSTN (124 aa)) is disordered. The segment covering 168-244 (GVDDEEEEDD…DEEEGEEEVG (77 aa)) has biased composition (acidic residues). Positions 192–243 (DDQEDGEGEAEEAAEEEEEEEEKTEDNETNLEEEEEDIENSDGDEEEGEEEV) form a coiled coil. Composition is skewed to basic and acidic residues over residues 245-254 (SVDKNEDGND) and 269-279 (STPKDAARSTN).

This sequence belongs to the ASF1 family. As to quaternary structure, interacts with histone H3/H4 heterodimers via both histone H3 and histone H4. Binds with higher affinity to H3/H4 heterodimers where histone H3 has been pre-acetylated on 'Lys-14'. Interacts with RAD53 and this may impair interaction with histones and chromatin assembly; the interaction is reduced upon activation of DNA damage or replication checkpoints which in turn promotes histone binding and chromatin assembly. Interacts with the CAC2 subunit of chromatin assembly factor 1 (CAF-1). Interacts with the HIR1, HIR2, HIR3 and HPC2 subunits of the HIR complex. Interacts with the RFC1, RFC2, RFC3, RFC4 and RFC5 subunits of the replication factor C (RF-C/RFC) complex; which may recruit this protein to DNA. Interacts with the SAS2, SAS4 and SAS5 subunits of the SAS/SAS-I complex. Interacts with the BDF1, BDF2, SPT15, TAF1 and TAF7 subunits of the TFIID complex. Interacts with RTT109 and VPS75; the interaction with RTT109 is direct.

Its subcellular location is the nucleus. Histone chaperone that facilitates histone deposition and histone exchange and removal during nucleosome assembly and disassembly. Facilitates histone deposition through both replication-dependent and replication-independent chromatin assembly pathways. Cooperates with chromatin assembly factor 1 (CAF-1) to promote replication-dependent chromatin assembly and with the HIR complex to promote replication-independent chromatin assembly, which may occur during transcription and DNA repair. May be required for the maintenance of a subset of replication elongation factors, including DNA polymerase epsilon, the RFC complex and PCNA, at stalled replication forks. Also required for RTT109-dependent acetylation of histone H3 on 'Lys-9' and 'Lys-56'. Promotion of RTT109-mediated histone H3 'Lys-56' acetylation is dependent on interactions with histone H3 pre-acetylated on 'Lys-14'. In Saccharomyces cerevisiae (strain ATCC 204508 / S288c) (Baker's yeast), this protein is Histone chaperone ASF1.